Consider the following 245-residue polypeptide: 8-amino-3,8-dideoxy-manno-octulosonate cytidylyltransferase (245 aa).

It belongs to the KdsB family.

It is found in the cytoplasm. It carries out the reaction 8-amino-3,8-dideoxy-alpha-D-manno-octulosonate + CTP = CMP-8-amino-3,8-dideoxy-alpha-D-manno-oct-2-ulosonate + diphosphate. The protein operates within bacterial outer membrane biogenesis; lipopolysaccharide biosynthesis. In terms of biological role, activates KDO8N (a required 8-carbon sugar) for incorporation into bacterial lipopolysaccharide in the Shewanella genus. In Shewanella frigidimarina (strain NCIMB 400), this protein is 8-amino-3,8-dideoxy-manno-octulosonate cytidylyltransferase.